Reading from the N-terminus, the 116-residue chain is Large ribosomal subunit protein bL20 (116 aa).

It belongs to the bacterial ribosomal protein bL20 family.

Functionally, binds directly to 23S ribosomal RNA and is necessary for the in vitro assembly process of the 50S ribosomal subunit. It is not involved in the protein synthesizing functions of that subunit. This is Large ribosomal subunit protein bL20 from Hydrogenobaculum sp. (strain Y04AAS1).